The primary structure comprises 187 residues: Keratin-associated protein 5-8 (187 aa).

9 consecutive repeat copies span residues 28–31 (CCVP), 34–37 (CCKP), 40–43 (CCVP), 109–112 (CCKP), 119–122 (CCKP), 138–141 (CCKP), 148–151 (CCKP), 167–170 (CCKP), and 177–180 (CCVP). Residues 28 to 180 (CCVPICCCKP…CCSQSSCCVP (153 aa)) form a 9 X 4 AA repeats of C-C-X-P region.

The protein belongs to the KRTAP type 5 family. Restricted to hair root, not detected in any other tissues. Expressed in cuticle layers of differentiating hair follicles.

Functionally, in the hair cortex, hair keratin intermediate filaments are embedded in an interfilamentous matrix, consisting of hair keratin-associated protein (KRTAP), which are essential for the formation of a rigid and resistant hair shaft through their extensive disulfide bond cross-linking with abundant cysteine residues of hair keratins. The matrix proteins include the high-sulfur and high-glycine-tyrosine keratins. This Homo sapiens (Human) protein is Keratin-associated protein 5-8 (KRTAP5-8).